The sequence spans 290 residues: UPF0046 protein K07C11.7 (290 aa).

A signal peptide spans 1 to 22; the sequence is MFHFSIGTVLISICWLAQWMEA. N-linked (GlcNAc...) asparagine glycosylation occurs at asparagine 204.

The protein belongs to the UPF0046 family.

The sequence is that of UPF0046 protein K07C11.7 from Caenorhabditis elegans.